We begin with the raw amino-acid sequence, 371 residues long: Undecaprenyl-diphosphatase 1 (371 aa).

Transmembrane regions (helical) follow at residues 53-73, 100-120, and 126-146; these read PYLA…IVAF, LAWL…LLEH, and LGRP…MLLG. The disordered stretch occupies residues 152 to 226; that stretch reads RSTTRGAPGP…PEAEDVTLPE (75 aa). Helical transmembrane passes span 291 to 311, 322 to 342, and 351 to 371; these read FAFL…LPDL, QTLF…RFLA, and TPFA…FGIF.

This sequence belongs to the UppP family.

It is found in the cell membrane. The enzyme catalyses di-trans,octa-cis-undecaprenyl diphosphate + H2O = di-trans,octa-cis-undecaprenyl phosphate + phosphate + H(+). Its function is as follows. Catalyzes the dephosphorylation of undecaprenyl diphosphate (UPP). Confers resistance to bacitracin. This is Undecaprenyl-diphosphatase 1 from Frankia casuarinae (strain DSM 45818 / CECT 9043 / HFP020203 / CcI3).